Reading from the N-terminus, the 582-residue chain is Adenine deaminase (582 aa).

The protein belongs to the metallo-dependent hydrolases superfamily. Adenine deaminase family. The cofactor is Mn(2+).

The catalysed reaction is adenine + H2O + H(+) = hypoxanthine + NH4(+). The polypeptide is Adenine deaminase (Oceanobacillus iheyensis (strain DSM 14371 / CIP 107618 / JCM 11309 / KCTC 3954 / HTE831)).